Reading from the N-terminus, the 195-residue chain is 3-isopropylmalate dehydratase small subunit (195 aa).

It belongs to the LeuD family. LeuD type 1 subfamily. In terms of assembly, heterodimer of LeuC and LeuD.

It carries out the reaction (2R,3S)-3-isopropylmalate = (2S)-2-isopropylmalate. It functions in the pathway amino-acid biosynthesis; L-leucine biosynthesis; L-leucine from 3-methyl-2-oxobutanoate: step 2/4. Functionally, catalyzes the isomerization between 2-isopropylmalate and 3-isopropylmalate, via the formation of 2-isopropylmaleate. This Corynebacterium kroppenstedtii (strain DSM 44385 / JCM 11950 / CIP 105744 / CCUG 35717) protein is 3-isopropylmalate dehydratase small subunit.